The chain runs to 356 residues: Rhomboid-related protein 1 (356 aa).

7 helical membrane passes run 107–129 (WCPPPIFMLLITIIQVGIFFFYW), 172–194 (YMFLHAGLNHLLGNVIIQLLVGI), 201–223 (KIWRIGPIYLLAVTSGSLLQYAI), 227–249 (SLLVGASAGVYALIFAHVANVIL), 256–275 (LRWIRVLVLFVFIFLDFGGA), 290–312 (HLAHIAGAVTGLFFGYVVLYNVV), and 319–341 (IIRYVCLFLYSAFFATTIIFVIV). The active-site Nucleophile is the Ser233. Residue His293 is part of the active site.

This sequence belongs to the peptidase S54 family.

The protein resides in the membrane. It catalyses the reaction Cleaves type-1 transmembrane domains using a catalytic dyad composed of serine and histidine that are contributed by different transmembrane domains.. In terms of biological role, serine protease which activates lin-3 isoform a in the proximal vulva precursor cells (VPC) during vulva development to transmit the inductive anchor cell signal to the distal VPCs. This chain is Rhomboid-related protein 1, found in Caenorhabditis elegans.